Consider the following 210-residue polypeptide: NAD(P)H-quinone oxidoreductase subunit I (210 aa).

2 consecutive 4Fe-4S ferredoxin-type domains span residues 55-84 (GRIH…VDWV) and 95-124 (RNYS…MTEE). Cys-64, Cys-67, Cys-70, Cys-74, Cys-104, Cys-107, Cys-110, and Cys-114 together coordinate [4Fe-4S] cluster.

This sequence belongs to the complex I 23 kDa subunit family. NDH-1 is composed of at least 11 different subunits. Requires [4Fe-4S] cluster as cofactor.

It localises to the cellular thylakoid membrane. It carries out the reaction a plastoquinone + NADH + (n+1) H(+)(in) = a plastoquinol + NAD(+) + n H(+)(out). The catalysed reaction is a plastoquinone + NADPH + (n+1) H(+)(in) = a plastoquinol + NADP(+) + n H(+)(out). Functionally, NDH-1 shuttles electrons from an unknown electron donor, via FMN and iron-sulfur (Fe-S) centers, to quinones in the respiratory and/or the photosynthetic chain. The immediate electron acceptor for the enzyme in this species is believed to be plastoquinone. Couples the redox reaction to proton translocation, and thus conserves the redox energy in a proton gradient. This is NAD(P)H-quinone oxidoreductase subunit I from Synechococcus sp. (strain CC9902).